Here is a 196-residue protein sequence, read N- to C-terminus: Phosphoheptose isomerase (196 aa).

The 160-residue stretch at 33–192 (LIQSLKNGGK…ESECGENGNT (160 aa)) folds into the SIS domain. 48 to 50 (NGG) contacts substrate. 2 residues coordinate Zn(2+): histidine 57 and glutamate 61. Substrate contacts are provided by residues glutamate 61, 90–91 (ND), 116–118 (STS), serine 121, and glutamine 168. Zn(2+)-binding residues include glutamine 168 and histidine 176.

It belongs to the SIS family. GmhA subfamily. In terms of assembly, homotetramer. Zn(2+) serves as cofactor.

Its subcellular location is the cytoplasm. It carries out the reaction 2 D-sedoheptulose 7-phosphate = D-glycero-alpha-D-manno-heptose 7-phosphate + D-glycero-beta-D-manno-heptose 7-phosphate. Its pathway is carbohydrate biosynthesis; D-glycero-D-manno-heptose 7-phosphate biosynthesis; D-glycero-alpha-D-manno-heptose 7-phosphate and D-glycero-beta-D-manno-heptose 7-phosphate from sedoheptulose 7-phosphate: step 1/1. In terms of biological role, catalyzes the isomerization of sedoheptulose 7-phosphate in D-glycero-D-manno-heptose 7-phosphate. The sequence is that of Phosphoheptose isomerase from Helicobacter hepaticus (strain ATCC 51449 / 3B1).